The following is a 339-amino-acid chain: MNQRNASMTVIGAGSYGTALAITLARNGHEVVLWGHDPEHIATLERDRCNAAFLPDVPFPDTLHLESDLVTALAASRNILVVVPSHVFGEVLRQIKPLMRPDARLVWATKGLEAETGRLLQDVAREALGDQIPLAVISGPTFAKELAAGLPTAISLASTDQTFADDLQQLLHCGKSFRVYSNPDFIGVQLGGAVKNVIAIGAGMSDGIGFGANARTALITRGLAEMSRLGAALGADPATFMGMAGLGDLVLTCTDNQSRNRRFGMMLGQGMDVQSAQEKIGQVVEGYRNTKEVRELAHRFGVEMPITEEIYQVLYCGKNAREAALTLLGRARKDERSSH.

The NADPH site is built by S15, Y16, H36, and K110. Sn-glycerol 3-phosphate contacts are provided by K110, G139, and T141. A143 is an NADPH binding site. 5 residues coordinate sn-glycerol 3-phosphate: K195, D248, S258, R259, and N260. The Proton acceptor role is filled by K195. Residue R259 coordinates NADPH. NADPH-binding residues include V283 and E285.

The protein belongs to the NAD-dependent glycerol-3-phosphate dehydrogenase family.

It is found in the cytoplasm. It carries out the reaction sn-glycerol 3-phosphate + NAD(+) = dihydroxyacetone phosphate + NADH + H(+). The catalysed reaction is sn-glycerol 3-phosphate + NADP(+) = dihydroxyacetone phosphate + NADPH + H(+). It functions in the pathway membrane lipid metabolism; glycerophospholipid metabolism. In terms of biological role, catalyzes the reduction of the glycolytic intermediate dihydroxyacetone phosphate (DHAP) to sn-glycerol 3-phosphate (G3P), the key precursor for phospholipid synthesis. The protein is Glycerol-3-phosphate dehydrogenase [NAD(P)+] of Shigella flexneri serotype 5b (strain 8401).